Consider the following 437-residue polypeptide: Glutamate-1-semialdehyde 2,1-aminomutase (437 aa).

Lysine 273 carries the N6-(pyridoxal phosphate)lysine modification.

It belongs to the class-III pyridoxal-phosphate-dependent aminotransferase family. HemL subfamily. In terms of assembly, homodimer. Pyridoxal 5'-phosphate serves as cofactor.

It is found in the cytoplasm. It catalyses the reaction (S)-4-amino-5-oxopentanoate = 5-aminolevulinate. It participates in porphyrin-containing compound metabolism; protoporphyrin-IX biosynthesis; 5-aminolevulinate from L-glutamyl-tRNA(Glu): step 2/2. In Chlamydia felis (strain Fe/C-56) (Chlamydophila felis), this protein is Glutamate-1-semialdehyde 2,1-aminomutase.